The primary structure comprises 880 residues: DNA mismatch repair protein MutS (880 aa).

ATP is bound at residue 635 to 642 (GPNMGGKS).

This sequence belongs to the DNA mismatch repair MutS family.

Functionally, this protein is involved in the repair of mismatches in DNA. It is possible that it carries out the mismatch recognition step. This protein has a weak ATPase activity. In Nitrosomonas eutropha (strain DSM 101675 / C91 / Nm57), this protein is DNA mismatch repair protein MutS.